Consider the following 278-residue polypeptide: Large ribosomal subunit protein uL2 (278 aa).

Residues 223–278 (RGSAMNPNDHPHGGGEGKAPVGRKAPMTPWGKKALGVKTRNKKKASTKLIVRRRTK) are disordered. Over residues 261 to 278 (TRNKKKASTKLIVRRRTK) the composition is skewed to basic residues.

Belongs to the universal ribosomal protein uL2 family. As to quaternary structure, part of the 50S ribosomal subunit. Forms a bridge to the 30S subunit in the 70S ribosome.

Its function is as follows. One of the primary rRNA binding proteins. Required for association of the 30S and 50S subunits to form the 70S ribosome, for tRNA binding and peptide bond formation. It has been suggested to have peptidyltransferase activity; this is somewhat controversial. Makes several contacts with the 16S rRNA in the 70S ribosome. The chain is Large ribosomal subunit protein uL2 from Spiroplasma kunkelii.